Here is a 519-residue protein sequence, read N- to C-terminus: Arabinose import ATP-binding protein AraG 2 (519 aa).

ABC transporter domains lie at 29–264 (LSLD…MVGR) and 264–515 (RSIE…LIKL). Residue 61–68 (GENGAGKS) participates in ATP binding.

The protein belongs to the ABC transporter superfamily. Arabinose importer (TC 3.A.1.2.2) family. In terms of assembly, the complex is composed of two ATP-binding proteins (AraG), two transmembrane proteins (AraH) and a solute-binding protein (AraF).

The protein localises to the cell inner membrane. It carries out the reaction L-arabinose(out) + ATP + H2O = L-arabinose(in) + ADP + phosphate + H(+). Functionally, part of the ABC transporter complex AraFGH involved in arabinose import. Responsible for energy coupling to the transport system. The protein is Arabinose import ATP-binding protein AraG 2 of Burkholderia ambifaria (strain ATCC BAA-244 / DSM 16087 / CCUG 44356 / LMG 19182 / AMMD) (Burkholderia cepacia (strain AMMD)).